The sequence spans 148 residues: Snaclec B2 (148 aa).

The first 24 residues, 1-24 (MGRLISVSFGLLVVFLSLSGTGAA), serve as a signal peptide directing secretion. Intrachain disulfides connect Cys27–Cys38, Cys55–Cys144, and Cys121–Cys136. Residues 34 to 145 (YDQHCYKVFD…CRLLGHFVCK (112 aa)) form the C-type lectin domain.

It belongs to the snaclec family. In terms of assembly, heterodimer; disulfide-linked. As to expression, expressed by the venom gland.

The protein localises to the secreted. Functionally, interferes with one step of hemostasis (modulation of platelet aggregation, or coagulation cascade, for example). The protein is Snaclec B2 of Macrovipera lebetinus (Levantine viper).